The sequence spans 121 residues: Protein yippee-like 5 (121 aa).

A Yippee domain is found at 13-110 (RLFSCANCDT…LERALVRESE (98 aa)). Residues C17, C20, C73, and C76 each contribute to the Zn(2+) site. Residue S118 is modified to Phosphoserine.

The protein belongs to the yippee family. Identified in the CTLH complex that contains GID4, RANBP9 and/or RANBP10, MKLN1, MAEA, RMND5A (or alternatively its paralog RMND5B), GID8, ARMC8, WDR26 and YPEL5. Within this complex, MAEA, RMND5A (or alternatively its paralog RMND5B), GID8, WDR26, and RANBP9 and/or RANBP10 form the catalytic core, while GID4, MKLN1, ARMC8 and YPEL5 have ancillary roles. Interacts with RANBP9 and RANBP10.

The protein resides in the nucleus. The protein localises to the cytoplasm. It localises to the cytoskeleton. It is found in the microtubule organizing center. Its subcellular location is the centrosome. The protein resides in the spindle pole. The protein localises to the midbody. Its function is as follows. Component of the CTLH E3 ubiquitin-protein ligase complex that selectively accepts ubiquitin from UBE2H and mediates ubiquitination and subsequent proteasomal degradation of the transcription factor HBP1. Required for normal cell proliferation. In Bos taurus (Bovine), this protein is Protein yippee-like 5 (YPEL5).